Reading from the N-terminus, the 144-residue chain is Large ribosomal subunit protein uL15 (144 aa).

The tract at residues 1–48 (MIKLESLQDPSPRKRRTKLLGRGPSSGHGKTSCRGHKGDGSRSGYKRR) is disordered.

It belongs to the universal ribosomal protein uL15 family. In terms of assembly, part of the 50S ribosomal subunit.

Its function is as follows. Binds to the 23S rRNA. This is Large ribosomal subunit protein uL15 from Chlamydia caviae (strain ATCC VR-813 / DSM 19441 / 03DC25 / GPIC) (Chlamydophila caviae).